The following is a 431-amino-acid chain: tRNA(Ile)-lysidine synthase (431 aa).

25 to 30 serves as a coordination point for ATP; sequence SGGPDS.

This sequence belongs to the tRNA(Ile)-lysidine synthase family.

Its subcellular location is the cytoplasm. The catalysed reaction is cytidine(34) in tRNA(Ile2) + L-lysine + ATP = lysidine(34) in tRNA(Ile2) + AMP + diphosphate + H(+). In terms of biological role, ligates lysine onto the cytidine present at position 34 of the AUA codon-specific tRNA(Ile) that contains the anticodon CAU, in an ATP-dependent manner. Cytidine is converted to lysidine, thus changing the amino acid specificity of the tRNA from methionine to isoleucine. The sequence is that of tRNA(Ile)-lysidine synthase from Lactobacillus gasseri (strain ATCC 33323 / DSM 20243 / BCRC 14619 / CIP 102991 / JCM 1131 / KCTC 3163 / NCIMB 11718 / NCTC 13722 / AM63).